A 530-amino-acid polypeptide reads, in one-letter code: Meiosis 1 arrest protein (530 aa).

Positions 463 to 530 (LHPHWESRAP…SEWEKDPSRP (68 aa)) are disordered. Residues 503–516 (ASKMPAASKSSSDA) show a composition bias toward low complexity.

Its subcellular location is the cytoplasm. Its function is as follows. Required for meiosis I progression during spermatogenesis. This chain is Meiosis 1 arrest protein (M1AP), found in Homo sapiens (Human).